The following is a 612-amino-acid chain: Dihydroxy-acid dehydratase (612 aa).

Asp-81 is a binding site for Mg(2+). Residue Cys-122 participates in [2Fe-2S] cluster binding. Mg(2+) is bound by residues Asp-123 and Lys-124. An N6-carboxylysine modification is found at Lys-124. Cys-195 provides a ligand contact to [2Fe-2S] cluster. A Mg(2+)-binding site is contributed by Glu-491. The active-site Proton acceptor is Ser-517.

The protein belongs to the IlvD/Edd family. As to quaternary structure, homodimer. [2Fe-2S] cluster serves as cofactor. It depends on Mg(2+) as a cofactor.

It catalyses the reaction (2R)-2,3-dihydroxy-3-methylbutanoate = 3-methyl-2-oxobutanoate + H2O. The enzyme catalyses (2R,3R)-2,3-dihydroxy-3-methylpentanoate = (S)-3-methyl-2-oxopentanoate + H2O. It functions in the pathway amino-acid biosynthesis; L-isoleucine biosynthesis; L-isoleucine from 2-oxobutanoate: step 3/4. The protein operates within amino-acid biosynthesis; L-valine biosynthesis; L-valine from pyruvate: step 3/4. In terms of biological role, functions in the biosynthesis of branched-chain amino acids. Catalyzes the dehydration of (2R,3R)-2,3-dihydroxy-3-methylpentanoate (2,3-dihydroxy-3-methylvalerate) into 2-oxo-3-methylpentanoate (2-oxo-3-methylvalerate) and of (2R)-2,3-dihydroxy-3-methylbutanoate (2,3-dihydroxyisovalerate) into 2-oxo-3-methylbutanoate (2-oxoisovalerate), the penultimate precursor to L-isoleucine and L-valine, respectively. This Bartonella henselae (strain ATCC 49882 / DSM 28221 / CCUG 30454 / Houston 1) (Rochalimaea henselae) protein is Dihydroxy-acid dehydratase.